The chain runs to 1133 residues: Nuclear pore complex-interacting protein family member B5 (1133 aa).

The helical transmembrane segment at Trp-60–Val-84 threads the bilayer. Disordered regions lie at residues Asn-241 to Ser-262, Leu-290 to Pro-575, and Glu-868 to Ser-1133. A compositionally biased stretch (polar residues) spans Gln-252 to Ser-262. Residues Pro-349–Pro-359 are compositionally biased toward pro residues. 7 stretches are compositionally biased toward basic and acidic residues: residues Asp-406–Arg-416, Asp-448–Arg-458, Asp-490–Arg-500, Asp-528–Arg-538, Asp-903–Arg-913, Asp-945–Arg-955, and Asp-987–Arg-997.

This sequence belongs to the NPIP family.

The protein localises to the membrane. This chain is Nuclear pore complex-interacting protein family member B5 (NPIPB5), found in Homo sapiens (Human).